We begin with the raw amino-acid sequence, 321 residues long: NADPH-dependent codeinone reductase 1-1 (321 aa).

NADPH is bound by residues Thr27 and Asp51. Active-site proton donor residues include Tyr56 and His119. His119 provides a ligand contact to substrate. The NADPH site is built by Gln187, Ser214, Leu216, Ser264, and Arg269.

This sequence belongs to the aldo/keto reductase family. In terms of tissue distribution, latex secreting cells (laticifer cells). Expressed constitutively and ubiquitously with highest levels in capsules. Restricted to the parietal region of sieve elements adjacent or proximal to laticifers in roots, stems, leaves and carpels.

The protein resides in the cytoplasm. The protein localises to the cytosol. It carries out the reaction codeine + NADP(+) = codeinone + NADPH + H(+). The enzyme catalyses neopine + NADP(+) = neopinone + NADPH + H(+). The catalysed reaction is morphine + NADP(+) = morphinone + NADPH + H(+). It catalyses the reaction neomorphine + NADP(+) = neomorphinone + NADPH + H(+). The protein operates within alkaloid biosynthesis; morphine biosynthesis. NADPH-dependent reductase involved in biosynthesis of morphinan-type benzylisoquinoline and opiate alkaloids natural products. Reduces codeinone to codeine in the penultimate step in morphine biosynthesis. Can use morphinone, hydrocodone and hydromorphone as substrate during reductive reaction with NADPH as cofactor, and morphine and dihydrocodeine as substrate during oxidative reaction with NADP as cofactor. Converts morphinone to morphine, and neomorphinone to neomorphine. Reduces irreversibly neopinone, a spontaneous isomer of codeinone, to neopine; in planta, neopine levels are limited to low levels. The protein is NADPH-dependent codeinone reductase 1-1 of Papaver somniferum (Opium poppy).